The chain runs to 462 residues: NAD(P) transhydrogenase subunit beta (462 aa).

Over 1-3 the chain is Periplasmic; it reads MSG. Residues 4-24 traverse the membrane as a helical segment; the sequence is GLVTAAYIVAAILFIFSLAGL. Residues 25–45 are Cytoplasmic-facing; that stretch reads SKHETSRQGNNFGIAGMAIAL. The helical transmembrane segment at 46–66 threads the bilayer; the sequence is IATIFGPDTGNVGWILLAMVI. The Periplasmic segment spans residues 67 to 82; it reads GGAIGIRLAKKVEMTE. A helical transmembrane segment spans residues 83–103; the sequence is MPELVAILHSFVGLAAVLVGF. Topologically, residues 104–115 are cytoplasmic; that stretch reads NSYLHHDAGMAP. A helical transmembrane segment spans residues 116–136; sequence ILVNIHLTEVFLGIFIGAVTF. Over 137–164 the chain is Periplasmic; it reads TGSVVAFGKLCGKISSKPLMLPNRHKMN. A helical transmembrane segment spans residues 165 to 185; that stretch reads LAALVVSFLLLIVFVRTDSVG. Over 186–188 the chain is Cytoplasmic; that stretch reads LQV. Residues 189-209 form a helical membrane-spanning segment; it reads LALLIMTAIALVFGWHLVASI. Residues 210–215 are Periplasmic-facing; that stretch reads GGADMP. The chain crosses the membrane as a helical span at residues 216–236; it reads VVVSMLNSYSGWAAAAAGFML. Residues 237–239 lie on the Cytoplasmic side of the membrane; it reads SND. The chain crosses the membrane as a helical span at residues 240–260; it reads LLIVTGALVGSSGAILSYIMC. At 261 to 308 the chain is on the periplasmic side; sequence KAMNRSFISVIAGGFGTDGSSTGDDQEVGEHREITAEETAELLKNSHS. Residues 309 to 329 form a helical membrane-spanning segment; the sequence is VIITPGYGMAVAQAQYPVAEI. At 330-462 the chain is on the cytoplasmic side; it reads TEKLRARGIN…ASVDAILKAL (133 aa).

This sequence belongs to the PNT beta subunit family. In terms of assembly, heterodimer of an alpha and a beta chain.

The protein localises to the cell inner membrane. It catalyses the reaction NAD(+) + NADPH + H(+)(in) = NADH + NADP(+) + H(+)(out). In terms of biological role, the transhydrogenation between NADH and NADP is coupled to respiration and ATP hydrolysis and functions as a proton pump across the membrane. The polypeptide is NAD(P) transhydrogenase subunit beta (pntB) (Escherichia coli O157:H7).